We begin with the raw amino-acid sequence, 93 residues long: Em protein H2 (93 aa).

Residues 1 to 93 (MASGQQERSQ…IDESKFKTKS (93 aa)) are disordered. Composition is skewed to basic and acidic residues over residues 9–19 (SQLDRKAREGE), 31–52 (LEAH…REQM), and 73–93 (GGER…KTKS).

The protein belongs to the small hydrophilic plant seed protein family.

Functionally, it is thought to provide protection for the cytoplasm during the desiccation stage of embryo development. The chain is Em protein H2 (EMH2) from Triticum aestivum (Wheat).